The following is a 492-amino-acid chain: Ketol-acid reductoisomerase (NADP(+)) (492 aa).

Residues alanine 15–serine 208 form the KARI N-terminal Rossmann domain. NADP(+) is bound by residues cysteine 45–glutamine 48, arginine 68, arginine 76, serine 78, and aspartate 108–glutamine 110. Histidine 132 is an active-site residue. Glycine 158 contacts NADP(+). KARI C-terminal knotted domains are found at residues serine 209–glutamine 344 and phenylalanine 345–methionine 485. Mg(2+) is bound by residues aspartate 217, glutamate 221, glutamate 389, and glutamate 393. Serine 414 serves as a coordination point for substrate.

The protein belongs to the ketol-acid reductoisomerase family. Mg(2+) serves as cofactor.

It carries out the reaction (2R)-2,3-dihydroxy-3-methylbutanoate + NADP(+) = (2S)-2-acetolactate + NADPH + H(+). It catalyses the reaction (2R,3R)-2,3-dihydroxy-3-methylpentanoate + NADP(+) = (S)-2-ethyl-2-hydroxy-3-oxobutanoate + NADPH + H(+). The protein operates within amino-acid biosynthesis; L-isoleucine biosynthesis; L-isoleucine from 2-oxobutanoate: step 2/4. It functions in the pathway amino-acid biosynthesis; L-valine biosynthesis; L-valine from pyruvate: step 2/4. In terms of biological role, involved in the biosynthesis of branched-chain amino acids (BCAA). Catalyzes an alkyl-migration followed by a ketol-acid reduction of (S)-2-acetolactate (S2AL) to yield (R)-2,3-dihydroxy-isovalerate. In the isomerase reaction, S2AL is rearranged via a Mg-dependent methyl migration to produce 3-hydroxy-3-methyl-2-ketobutyrate (HMKB). In the reductase reaction, this 2-ketoacid undergoes a metal-dependent reduction by NADPH to yield (R)-2,3-dihydroxy-isovalerate. This is Ketol-acid reductoisomerase (NADP(+)) from Erwinia tasmaniensis (strain DSM 17950 / CFBP 7177 / CIP 109463 / NCPPB 4357 / Et1/99).